Consider the following 416-residue polypeptide: UPF0761 membrane protein Rfer_2991 (416 aa).

The next 6 membrane-spanning stretches (helical) occupy residues Met60 to Ala80, Leu117 to Asp137, Val156 to Ile176, Val187 to Val207, Trp222 to Ala242, and Ile268 to Ala288.

It belongs to the UPF0761 family.

The protein localises to the cell inner membrane. The chain is UPF0761 membrane protein Rfer_2991 from Albidiferax ferrireducens (strain ATCC BAA-621 / DSM 15236 / T118) (Rhodoferax ferrireducens).